Reading from the N-terminus, the 748-residue chain is Translation factor GUF1 homolog 2, mitochondrial (748 aa).

The transit peptide at 1 to 29 directs the protein to the mitochondrion; that stretch reads MRVGCCLLLKPLRQRLCTASISSRHIMRW. The tr-type G domain maps to 94 to 276; that stretch reads SHIRNVAVVA…AIIERVPPPT (183 aa). Residues 103-110, 167-171, and 221-224 each bind GTP; these read AHVDHGKT, DTPGH, and TKMD.

Belongs to the TRAFAC class translation factor GTPase superfamily. Classic translation factor GTPase family. LepA subfamily.

The protein resides in the mitochondrion inner membrane. It catalyses the reaction GTP + H2O = GDP + phosphate + H(+). Its function is as follows. Promotes mitochondrial protein synthesis. May act as a fidelity factor of the translation reaction, by catalyzing a one-codon backward translocation of tRNAs on improperly translocated ribosomes. Binds to mitochondrial ribosomes in a GTP-dependent manner. The polypeptide is Translation factor GUF1 homolog 2, mitochondrial (Trypanosoma cruzi (strain CL Brener)).